Consider the following 240-residue polypeptide: MSSCFCSKSQETEKRGAVSEDQLVISDDSTHPANLICELCKVFYNNGWVTGTGGGISIREGSKIYIAPSGVQKERMVPDNMFVMDLESENYLRTPLTLKPSACTPLFLSAYKMRDAGACIHTHSQAAVMVTLLYDKVFEISSIEQIKAIPKVTEKGNLMYSDRLVIPIIENTEREEDLTDSLQQAIEEYPGTTAVLVRRHGIYVWGETVWKAKVYNEAIDYLLELALKMHQLGIPTVKQN.

C103 provides a ligand contact to substrate. 2 residues coordinate Zn(2+): H121 and H123. Residue E144 is the Proton donor/acceptor of the active site. H200 contacts Zn(2+).

It belongs to the aldolase class II family. MtnB subfamily. Zn(2+) serves as cofactor.

It is found in the cytoplasm. It carries out the reaction 5-(methylsulfanyl)-D-ribulose 1-phosphate = 5-methylsulfanyl-2,3-dioxopentyl phosphate + H2O. It functions in the pathway amino-acid biosynthesis; L-methionine biosynthesis via salvage pathway; L-methionine from S-methyl-5-thio-alpha-D-ribose 1-phosphate: step 2/6. Its function is as follows. Catalyzes the dehydration of methylthioribulose-1-phosphate (MTRu-1-P) into 2,3-diketo-5-methylthiopentyl-1-phosphate (DK-MTP-1-P). This chain is Methylthioribulose-1-phosphate dehydratase, found in Komagataella phaffii (strain GS115 / ATCC 20864) (Yeast).